We begin with the raw amino-acid sequence, 166 residues long: uncharacterized protein (166 aa).

Pentapeptide repeat domains lie at 38-77, 78-117, and 118-157; these read GECLDCNLAGADLREFNLENARLNRSDLSGANLSGVNLRR, ALLDRANLTGANLSETDLTEAALTEANLAGADLSGANLER, and SFLRDVDLTGANLKGANLAWANLTAANLTDVDLEEAEFWE.

This is an uncharacterized protein from Synechocystis sp. (strain ATCC 27184 / PCC 6803 / Kazusa).